Reading from the N-terminus, the 563-residue chain is Proline--tRNA ligase (563 aa).

Belongs to the class-II aminoacyl-tRNA synthetase family. ProS type 1 subfamily. In terms of assembly, homodimer.

The protein resides in the cytoplasm. The catalysed reaction is tRNA(Pro) + L-proline + ATP = L-prolyl-tRNA(Pro) + AMP + diphosphate. Functionally, catalyzes the attachment of proline to tRNA(Pro) in a two-step reaction: proline is first activated by ATP to form Pro-AMP and then transferred to the acceptor end of tRNA(Pro). As ProRS can inadvertently accommodate and process non-cognate amino acids such as alanine and cysteine, to avoid such errors it has two additional distinct editing activities against alanine. One activity is designated as 'pretransfer' editing and involves the tRNA(Pro)-independent hydrolysis of activated Ala-AMP. The other activity is designated 'posttransfer' editing and involves deacylation of mischarged Ala-tRNA(Pro). The misacylated Cys-tRNA(Pro) is not edited by ProRS. This Persephonella marina (strain DSM 14350 / EX-H1) protein is Proline--tRNA ligase.